The following is a 482-amino-acid chain: Putative metabolite transport protein YfiG (482 aa).

Residues 1 to 29 lie on the Cytoplasmic side of the membrane; sequence MSTKKKEAVIGKESLAHKGLLRTITLVST. The helical transmembrane segment at 30–50 threads the bilayer; that stretch reads FGGLLFGYDTGVINGALPFMA. Topologically, residues 51–59 are extracellular; the sequence is TAGQLNLTP. The chain crosses the membrane as a helical span at residues 60-80; the sequence is VTEGLVASSLLLGAAFGAMFG. The Cytoplasmic segment spans residues 81-92; that stretch reads GRLSDRHGRRKT. A helical transmembrane segment spans residues 93-113; the sequence is ILYLALLFIAATLGCTFSPNA. Over 114 to 120 the chain is Extracellular; sequence SVMIAFR. A helical transmembrane segment spans residues 121 to 141; sequence FLLGLAVGCASVTVPTFLAEI. The Cytoplasmic portion of the chain corresponds to 142–155; sequence SPAERRGRIVTQNE. Residues 156-176 form a helical membrane-spanning segment; sequence LMIVIGQLLAYTFNAIIGSTM. The Extracellular segment spans residues 177 to 184; the sequence is GESANVWR. Residues 185–205 traverse the membrane as a helical segment; the sequence is YMLVIATLPAVVLWFGMLIVP. At 206–263 the chain is on the cytoplasmic side; sequence ESPRWLAAKGRMGDALRVLRQIREDSQAQQEIKEIKHAIEGTAKKAGFHDFQEPWIRR. The chain crosses the membrane as a helical span at residues 264–284; the sequence is ILFIGIGIAIVQQITGVNSIM. Topologically, residues 285–301 are extracellular; the sequence is YYGTEILREAGFQTEAA. The chain crosses the membrane as a helical span at residues 302–322; sequence LIGNIANGVISVIAVIFGIWL. At 323–331 the chain is on the cytoplasmic side; it reads LGKVRRRPM. The next 2 helical transmembrane spans lie at 332–352 and 353–373; these read LIIG…LSIV and LEGT…FLAF. Residues 374–400 lie on the Cytoplasmic side of the membrane; sequence QQTAISTVTWLMLSEIFPMHVRGLGMG. A helical membrane pass occupies residues 401-421; that stretch reads ISTFCLWTANFLIGFTFPILL. Residues 422–423 lie on the Extracellular side of the membrane; it reads NH. Residues 424-444 traverse the membrane as a helical segment; it reads IGMSATFFIFVAMNILAILFV. At 445 to 482 the chain is on the cytoplasmic side; that stretch reads KKYVPETKGRSLEQLEHSFRQYGRRADQEIQNQTTHLS.

This sequence belongs to the major facilitator superfamily. Sugar transporter (TC 2.A.1.1) family.

It localises to the cell membrane. In Bacillus subtilis (strain 168), this protein is Putative metabolite transport protein YfiG (yfiG).